The sequence spans 302 residues: Tegument protein VP22 (302 aa).

A compositionally biased stretch (basic and acidic residues) spans 1–10; sequence MASSDGDRLC. Disordered regions lie at residues 1-42 and 125-167; these read MASS…PDDS and SFTK…TATS. Residues 154-244 are interaction with gE; that stretch reads RPISFSTAPK…ANEADLGEGA (91 aa). Polar residues predominate over residues 157–167; sequence SFSTAPKTATS. The short motif at 212 to 224 is the Nuclear export signal element; sequence LDRLLTGAVIRIT. The tract at residues 243-302 is disordered; the sequence is GASVSKRGHNRKTGDLQGGMGNEPMYAQVRKPKSRTDTQTTGRITNRSRARSASRTDARK.

It belongs to the alphaherpesvirinae VP22 tegument protein family. Interacts with gE (via C-terminus); this interaction is necessary for the recruitment of VP22/ORF9 to the Golgi and its packaging into virions. Interacts with gM (via C-terminus). Interacts with VP16/ORF10; this interaction allows the formation of a tripartite complex composed of VP16/ORF10, VP22/ORF9 and VHS/ORF17. Interacts with the capsid-binding protein ORF44. Interacts with host CGAS. Highly phosphorylated in the host cell. Packaging is selective for underphosphorylated forms.

The protein localises to the virion tegument. It localises to the host cytoplasm. The protein resides in the host nucleus. It is found in the host Golgi apparatus. Its function is as follows. Tegument protein that plays different roles during the time course of infection. Participates in both the accumulation of viral mRNAs and viral protein translation at late time of infection. Modulates the RNase activity of the virion host shutoff protein ORF17 probably to ensure necessary levels of key cellular mRNAs and proteins. Plays a role in microtubule reorganization that occurs after viral infection by stabilizing microtubule network. Plays a role in the inhibition of host innate immune system by targeting the CGAS enzymatic activity which is the principal cytosolic DNA sensor that detects invading viral DNA. Acts by mediating disruption of liquid-like droplets in which CGAS is activated, thereby preventing CGAS activity. In Varicella-zoster virus (strain Oka vaccine) (HHV-3), this protein is Tegument protein VP22.